The primary structure comprises 495 residues: Internal alternative NAD(P)H-ubiquinone oxidoreductase A1, mitochondrial (495 aa).

The transit peptide at Met-1–Gln-41 directs the protein to the mitochondrion. Position 61-91 (Arg-61–Arg-91) interacts with FAD. Leu-228 to Tyr-264 provides a ligand contact to NAD(+). The short motif at Leu-486–Ile-495 is the Microbody targeting signal element.

The protein belongs to the NADH dehydrogenase family. FAD serves as cofactor.

The protein localises to the mitochondrion inner membrane. It is found in the peroxisome. It carries out the reaction a quinone + NADH + H(+) = a quinol + NAD(+). It catalyses the reaction a ubiquinone + NADH + H(+) = a ubiquinol + NAD(+). In terms of biological role, alternative NADH-ubiquinone oxidoreductase which catalyzes the oxidation of mitochondrial NADH does not translocate protons across the inner mitochondrial membrane. The chain is Internal alternative NAD(P)H-ubiquinone oxidoreductase A1, mitochondrial (NDA1) from Solanum tuberosum (Potato).